The primary structure comprises 323 residues: o-succinylbenzoate synthase (323 aa).

Lys-134 acts as the Proton donor in catalysis. The Mg(2+) site is built by Asp-162, Glu-191, and Asp-214. The Proton acceptor role is filled by Lys-236.

It belongs to the mandelate racemase/muconate lactonizing enzyme family. MenC type 1 subfamily. Requires a divalent metal cation as cofactor.

The enzyme catalyses (1R,6R)-6-hydroxy-2-succinyl-cyclohexa-2,4-diene-1-carboxylate = 2-succinylbenzoate + H2O. It functions in the pathway quinol/quinone metabolism; 1,4-dihydroxy-2-naphthoate biosynthesis; 1,4-dihydroxy-2-naphthoate from chorismate: step 4/7. It participates in quinol/quinone metabolism; menaquinone biosynthesis. Converts 2-succinyl-6-hydroxy-2,4-cyclohexadiene-1-carboxylate (SHCHC) to 2-succinylbenzoate (OSB). The polypeptide is o-succinylbenzoate synthase (Photorhabdus laumondii subsp. laumondii (strain DSM 15139 / CIP 105565 / TT01) (Photorhabdus luminescens subsp. laumondii)).